We begin with the raw amino-acid sequence, 362 residues long: Mannan endo-1,4-beta-mannosidase (362 aa).

The N-terminal stretch at 1–26 (MFKKHTISLLIIFLLASAVLAKPIEA) is a signal peptide. The 312-residue stretch at 38-349 (QTTKTVMNWL…YHDSWTLNKG (312 aa)) folds into the GH26 domain. His-131 contributes to the substrate binding site. Glu-193 serves as the catalytic Proton donor. Residues Trp-198 and Tyr-268 each coordinate substrate. Catalysis depends on Glu-292, which acts as the Nucleophile. A substrate-binding site is contributed by 324 to 325 (WN).

This sequence belongs to the glycosyl hydrolase 26 family. In terms of assembly, homodimer.

It is found in the secreted. It catalyses the reaction Random hydrolysis of (1-&gt;4)-beta-D-mannosidic linkages in mannans, galactomannans and glucomannans.. In terms of biological role, involved in the degradation of glucomannan. Catalyzes the endo hydrolysis of beta-1,4-linked mannan, galactomannan and glucomannan. In Bacillus subtilis (strain 168), this protein is Mannan endo-1,4-beta-mannosidase.